We begin with the raw amino-acid sequence, 345 residues long: Probable dual-specificity RNA methyltransferase RlmN (345 aa).

Catalysis depends on glutamate 90, which acts as the Proton acceptor. The Radical SAM core domain occupies 96 to 326 (YDYGNSICIS…STIRKEMGAD (231 aa)). Cysteine 103 and cysteine 331 are joined by a disulfide. [4Fe-4S] cluster contacts are provided by cysteine 110, cysteine 114, and cysteine 117. S-adenosyl-L-methionine-binding positions include 157 to 158 (GE), serine 189, 212 to 214 (SLH), and asparagine 288. The active-site S-methylcysteine intermediate is the cysteine 331.

The protein belongs to the radical SAM superfamily. RlmN family. Requires [4Fe-4S] cluster as cofactor.

Its subcellular location is the cytoplasm. The enzyme catalyses adenosine(2503) in 23S rRNA + 2 reduced [2Fe-2S]-[ferredoxin] + 2 S-adenosyl-L-methionine = 2-methyladenosine(2503) in 23S rRNA + 5'-deoxyadenosine + L-methionine + 2 oxidized [2Fe-2S]-[ferredoxin] + S-adenosyl-L-homocysteine. The catalysed reaction is adenosine(37) in tRNA + 2 reduced [2Fe-2S]-[ferredoxin] + 2 S-adenosyl-L-methionine = 2-methyladenosine(37) in tRNA + 5'-deoxyadenosine + L-methionine + 2 oxidized [2Fe-2S]-[ferredoxin] + S-adenosyl-L-homocysteine. In terms of biological role, specifically methylates position 2 of adenine 2503 in 23S rRNA and position 2 of adenine 37 in tRNAs. This is Probable dual-specificity RNA methyltransferase RlmN from Clostridium acetobutylicum (strain ATCC 824 / DSM 792 / JCM 1419 / IAM 19013 / LMG 5710 / NBRC 13948 / NRRL B-527 / VKM B-1787 / 2291 / W).